The sequence spans 245 residues: Polyhedrin (245 aa).

The protein belongs to the polyhedrin family.

Its function is as follows. Major component of the virus occlusion bodies, which are large proteinaceous structures (polyhedra), that protect the virus from the outside environment for extended periods until they are ingested by insect larvae. This is Polyhedrin (PH) from Hyphantria cunea nuclear polyhedrosis virus (HcNPV).